A 307-amino-acid polypeptide reads, in one-letter code: NAD kinase (307 aa).

The active-site Proton acceptor is D85. NAD(+) contacts are provided by residues 85–86, R90, 159–160, D189, and 200–205; these read DG, NE, and TAYAFS.

This sequence belongs to the NAD kinase family. A divalent metal cation serves as cofactor.

The protein localises to the cytoplasm. The catalysed reaction is NAD(+) + ATP = ADP + NADP(+) + H(+). Involved in the regulation of the intracellular balance of NAD and NADP, and is a key enzyme in the biosynthesis of NADP. Catalyzes specifically the phosphorylation on 2'-hydroxyl of the adenosine moiety of NAD to yield NADP. The sequence is that of NAD kinase from Mycobacterium bovis (strain ATCC BAA-935 / AF2122/97).